An 824-amino-acid chain; its full sequence is Protein-glutamine gamma-glutamyltransferase K (824 aa).

Residues 1–10 (MEGPRSDVGR) are compositionally biased toward basic and acidic residues. Disordered stretches follow at residues 1–44 (MEGP…GGRS) and 61–110 (DDWG…AAGD). Thr-20 carries the post-translational modification Phosphothreonine. Residues Ser-22, Ser-70, Ser-92, Ser-100, and Ser-103 each carry the phosphoserine modification. The segment covering 65–76 (PEPSGSRSRGTS) has biased composition (low complexity). A compositionally biased stretch (basic and acidic residues) spans 85–100 (GDSRGRDSRGGRRPES). Residues Cys-385, His-444, and Asp-467 contribute to the active site. 4 residues coordinate Ca(2+): Asn-507, Asp-509, Glu-556, and Glu-561. Residues 801–824 (RGFSEAVGDSRSGENIPMAFRGGA) are disordered. Ser-812 carries the phosphoserine modification.

It belongs to the transglutaminase superfamily. Transglutaminase family. As to quaternary structure, interacts with PLAAT4. It depends on Ca(2+) as a cofactor. Palmitoylated. In terms of processing, the membrane anchorage region possesses a cluster of five cysteines within which fatty acid(s) may become thioester-linked. It is subject to phorbol ester-stimulated phosphorylation and is hypersensitive to proteolysis, which releases the enzyme in a soluble form. Post-translationally, tyrosine-phosphorylated.

Its subcellular location is the membrane. It carries out the reaction L-glutaminyl-[protein] + L-lysyl-[protein] = [protein]-L-lysyl-N(6)-5-L-glutamyl-[protein] + NH4(+). Catalyzes the cross-linking of proteins and the conjugation of polyamines to proteins. Responsible for cross-linking epidermal proteins during formation of the stratum corneum. Involved in cell proliferation. The chain is Protein-glutamine gamma-glutamyltransferase K (Tgm1) from Rattus norvegicus (Rat).